Here is a 292-residue protein sequence, read N- to C-terminus: Small ribosomal subunit biogenesis GTPase RsgA (292 aa).

A CP-type G domain is found at 64 to 221 (RSELFRPAVA…LVDTPGFSSL (158 aa)). Residues 113-116 (NKMD) and 164-172 (GPSGVGKST) each bind GTP. Zn(2+)-binding residues include Cys-245, Cys-250, His-252, and Cys-258.

This sequence belongs to the TRAFAC class YlqF/YawG GTPase family. RsgA subfamily. Monomer. Associates with 30S ribosomal subunit, binds 16S rRNA. Zn(2+) serves as cofactor.

It is found in the cytoplasm. One of several proteins that assist in the late maturation steps of the functional core of the 30S ribosomal subunit. Helps release RbfA from mature subunits. May play a role in the assembly of ribosomal proteins into the subunit. Circularly permuted GTPase that catalyzes slow GTP hydrolysis, GTPase activity is stimulated by the 30S ribosomal subunit. The chain is Small ribosomal subunit biogenesis GTPase RsgA from Clostridium botulinum (strain Okra / Type B1).